The sequence spans 325 residues: Tetraacyldisaccharide 4'-kinase (325 aa).

An ATP-binding site is contributed by 55–62; the sequence is TAGGNGKT.

The protein belongs to the LpxK family.

It carries out the reaction a lipid A disaccharide + ATP = a lipid IVA + ADP + H(+). It functions in the pathway glycolipid biosynthesis; lipid IV(A) biosynthesis; lipid IV(A) from (3R)-3-hydroxytetradecanoyl-[acyl-carrier-protein] and UDP-N-acetyl-alpha-D-glucosamine: step 6/6. Its function is as follows. Transfers the gamma-phosphate of ATP to the 4'-position of a tetraacyldisaccharide 1-phosphate intermediate (termed DS-1-P) to form tetraacyldisaccharide 1,4'-bis-phosphate (lipid IVA). This is Tetraacyldisaccharide 4'-kinase from Salmonella paratyphi A (strain ATCC 9150 / SARB42).